Here is a 254-residue protein sequence, read N- to C-terminus: Probable triosephosphate isomerase 2 (254 aa).

Residue 9-11 coordinates substrate; sequence NMK. Histidine 96 (electrophile) is an active-site residue. Residue glutamate 168 is the Proton acceptor of the active site. Substrate-binding residues include glycine 174 and serine 212.

This sequence belongs to the triosephosphate isomerase family. As to quaternary structure, homodimer.

It localises to the cytoplasm. The enzyme catalyses D-glyceraldehyde 3-phosphate = dihydroxyacetone phosphate. The protein operates within carbohydrate biosynthesis; gluconeogenesis. It participates in carbohydrate degradation; glycolysis; D-glyceraldehyde 3-phosphate from glycerone phosphate: step 1/1. Involved in the gluconeogenesis. Catalyzes stereospecifically the conversion of dihydroxyacetone phosphate (DHAP) to D-glyceraldehyde-3-phosphate (G3P). The polypeptide is Probable triosephosphate isomerase 2 (Listeria monocytogenes serovar 1/2a (strain ATCC BAA-679 / EGD-e)).